A 741-amino-acid chain; its full sequence is Methionine--tRNA ligase (741 aa).

Over residues 1–22 (MTMKQYTMSKMNAETQTQTRES) the composition is skewed to polar residues. Residues 1 to 25 (MTMKQYTMSKMNAETQTQTRESFPT) form a disordered region. The 'HIGH' region motif lies at 36–46 (PYANGDLHIGH). The Zn(2+) site is built by Cys-167, Cys-170, Cys-179, and Cys-183. The disordered stretch occupies residues 309–329 (VRSHSSSSAKDSSEGNSPSNI). Residues 311–329 (SHSSSSAKDSSEGNSPSNI) are compositionally biased toward low complexity. An ATP-binding site is contributed by Thr-381. The segment at 591-629 (KLADRVTDPTDDDDSDTDTETGTDVAETTNESHSESNMT) is disordered. Over residues 599–611 (PTDDDDSDTDTET) the composition is skewed to acidic residues. The span at 616–629 (AETTNESHSESNMT) shows a compositional bias: polar residues. In terms of domain architecture, tRNA-binding spans 643–741 (EFEELDLRVA…EDADPGTSIQ (99 aa)).

The protein belongs to the class-I aminoacyl-tRNA synthetase family. MetG type 1 subfamily. Homodimer. Requires Zn(2+) as cofactor.

The protein resides in the cytoplasm. It catalyses the reaction tRNA(Met) + L-methionine + ATP = L-methionyl-tRNA(Met) + AMP + diphosphate. In terms of biological role, is required not only for elongation of protein synthesis but also for the initiation of all mRNA translation through initiator tRNA(fMet) aminoacylation. This Haloquadratum walsbyi (strain DSM 16790 / HBSQ001) protein is Methionine--tRNA ligase.